The primary structure comprises 392 residues: ATP phosphoribosyltransferase regulatory subunit (392 aa).

It belongs to the class-II aminoacyl-tRNA synthetase family. HisZ subfamily. In terms of assembly, heteromultimer composed of HisG and HisZ subunits.

It is found in the cytoplasm. It functions in the pathway amino-acid biosynthesis; L-histidine biosynthesis; L-histidine from 5-phospho-alpha-D-ribose 1-diphosphate: step 1/9. In terms of biological role, required for the first step of histidine biosynthesis. May allow the feedback regulation of ATP phosphoribosyltransferase activity by histidine. This chain is ATP phosphoribosyltransferase regulatory subunit, found in Geobacillus sp. (strain WCH70).